Reading from the N-terminus, the 358-residue chain is C-X-C chemokine receptor type 4-A (358 aa).

The tract at residues 1 to 25 is important for chemokine binding and signaling; sequence MDGFSGGIDINIFDGNSTENGSGDF. Residues 1-44 are Extracellular-facing; sequence MDGFSGGIDINIFDGNSTENGSGDFEDFIEPCFMHENSDFNRIF. N-linked (GlcNAc...) asparagine glycans are attached at residues asparagine 16 and asparagine 20. 2 disulfides stabilise this stretch: cysteine 32-cysteine 281 and cysteine 113-cysteine 190. The chain crosses the membrane as a helical span at residues 45-67; it reads LPTIYSFIFLLGIIGNGLVVVVM. The Cytoplasmic segment spans residues 68–81; sequence GYQKKSRTMTDKYR. The helical transmembrane segment at 82–103 threads the bilayer; that stretch reads LHLSVADLLFVFTLPFWSVDAA. The interval 98-101 is chemokine binding; it reads WSVD. Over 104–114 the chain is Extracellular; the sequence is IGWYFKEFLCK. A helical transmembrane segment spans residues 115 to 134; it reads AVHVIYTVNLYSSVLILAFI. Positions 117–121 are chemokine binding; sequence HVIYT. The Cytoplasmic portion of the chain corresponds to 135-158; it reads SLDRYLAIVHATNSQGSRKMLADK. The interval 139–151 is involved in dimerization; when bound to chemokine; sequence YLAIVHATNSQGS. A helical membrane pass occupies residues 159-178; it reads VVYAGVWLPALLLTVPDLVF. The Extracellular segment spans residues 179–202; the sequence is ARVSDENGQFVCDRIYPIENRETW. The tract at residues 190–194 is chemokine binding, important for signaling; it reads CDRIY. A helical transmembrane segment spans residues 203-223; that stretch reads TVGFRFLHITVGLILPGLIIL. At 224–248 the chain is on the cytoplasmic side; that stretch reads ICYCVIISKLSHSKGHQKRKALKTT. A helical transmembrane segment spans residues 249 to 268; that stretch reads VILILAFFACWLPYYVCLTT. Residues 269-289 lie on the Extracellular side of the membrane; the sequence is DTFMLLGLVKGDCIWENTLHM. The helical transmembrane segment at 290-309 threads the bilayer; sequence AISITEALAFFHCCLNPILY. The Cytoplasmic portion of the chain corresponds to 310-358; it reads AFLGAKFKTSAQNAFTSVSRGSSLKILSKKRAGLSSVSTESESSSFHSS. A disordered region spans residues 338–358; it reads KKRAGLSSVSTESESSSFHSS. Residues 344–358 show a composition bias toward low complexity; it reads SSVSTESESSSFHSS.

Belongs to the G-protein coupled receptor 1 family. As to quaternary structure, monomer. Can form dimers. Post-translationally, sulfation is required for efficient binding of cxcl12/sdf-1alpha and promotes its dimerization. In terms of processing, O- and N-glycosylated. Highly expressed in the embryonic nervous system including forebrain, hindbrain and sensory organs (including eye), and in neural crest cells. Also expressed in the dorsal lateral plate, the first site of definitive hematopoiesis in the embryo. Appears in migrating presumptive primordial germ cells (pPGCs) from stage 24. Expressed in the epidermis at stage 40. In the adult, highly expressed in the spleen with lower levels of expression in the liver and very low levels in kidney, heart, skin and brain.

The protein localises to the cell membrane. It localises to the cytoplasm. Its subcellular location is the nucleus. The protein resides in the early endosome. It is found in the late endosome. The protein localises to the lysosome. In terms of biological role, receptor for the C-X-C chemokine cxcl12/sdf-1. Transduces a signal by increasing the intracellular level of calcium ions. Signaling with cxcl12/sdf-1 mediates the directional movement of mesodermal cells during gastrulation. May play a role in the migration of embryonic presumptive primordial germ cells (pPGCs). May also be involved in regulating the migration of hematopoietic stem cells into the larval liver. This is C-X-C chemokine receptor type 4-A (cxcr4-a) from Xenopus laevis (African clawed frog).